Consider the following 565-residue polypeptide: NAD-dependent malic enzyme (565 aa).

Catalysis depends on Tyr104, which acts as the Proton donor. Arg157 provides a ligand contact to NAD(+). The active-site Proton acceptor is Lys175. Positions 246, 247, and 270 each coordinate a divalent metal cation. NAD(+)-binding residues include Asp270 and Asn418.

Belongs to the malic enzymes family. As to quaternary structure, homotetramer. Mg(2+) is required as a cofactor. The cofactor is Mn(2+).

It catalyses the reaction (S)-malate + NAD(+) = pyruvate + CO2 + NADH. It carries out the reaction oxaloacetate + H(+) = pyruvate + CO2. This chain is NAD-dependent malic enzyme, found in Shigella boydii serotype 18 (strain CDC 3083-94 / BS512).